Here is a 155-residue protein sequence, read N- to C-terminus: Class I hydrophobin C (155 aa).

The signal sequence occupies residues 1–22 (MLVTMRLSRSIAVFTLVTYATG). Disulfide bonds link C52–C129, C60–C123, C61–C101, and C130–C148.

Belongs to the fungal hydrophobin family. As to quaternary structure, self-assembles to form functional amyloid fibrils called rodlets. Self-assembly into fibrillar rodlets occurs spontaneously at hydrophobic:hydrophilic interfaces and the rodlets further associate laterally to form amphipathic monolayers.

The protein localises to the secreted. Its subcellular location is the spore wall. In terms of biological role, aerial growth, conidiation, and dispersal of filamentous fungi in the environment rely upon a capability of their secreting small amphipathic proteins called hydrophobins (HPBs) with low sequence identity. Class I can self-assemble into an outermost layer of rodlet bundles on aerial cell surfaces, conferring cellular hydrophobicity that supports fungal growth, development and dispersal; whereas Class II form highly ordered films at water-air interfaces through intermolecular interactions but contribute nothing to the rodlet structure. RodC is a class I hydrophobin that, unlike rodA, is not required for rodlet formation. This chain is Class I hydrophobin C, found in Aspergillus fumigatus (strain ATCC MYA-4609 / CBS 101355 / FGSC A1100 / Af293) (Neosartorya fumigata).